The chain runs to 283 residues: Orotidine 5'-phosphate decarboxylase (283 aa).

The active-site Proton donor is the K97.

Belongs to the OMP decarboxylase family. Type 2 subfamily.

The enzyme catalyses orotidine 5'-phosphate + H(+) = UMP + CO2. Its pathway is pyrimidine metabolism; UMP biosynthesis via de novo pathway; UMP from orotate: step 2/2. The polypeptide is Orotidine 5'-phosphate decarboxylase (Clostridium botulinum (strain Okra / Type B1)).